A 234-amino-acid chain; its full sequence is 7-cyano-7-deazaguanine synthase (234 aa).

ATP is bound at residue 13–23; that stretch reads FSGGIDSTTCL. Residues C197, C207, C210, and C213 each coordinate Zn(2+).

It belongs to the QueC family. The cofactor is Zn(2+).

The enzyme catalyses 7-carboxy-7-deazaguanine + NH4(+) + ATP = 7-cyano-7-deazaguanine + ADP + phosphate + H2O + H(+). The protein operates within purine metabolism; 7-cyano-7-deazaguanine biosynthesis. In terms of biological role, catalyzes the ATP-dependent conversion of 7-carboxy-7-deazaguanine (CDG) to 7-cyano-7-deazaguanine (preQ(0)). The polypeptide is 7-cyano-7-deazaguanine synthase (Syntrophobacter fumaroxidans (strain DSM 10017 / MPOB)).